The following is a 242-amino-acid chain: Histone-lysine N-methyltransferase set-1 (242 aa).

The interval 1–61 (MKVAAKKLAT…TRSRKGVSVK (61 aa)) is disordered. Residues 30-43 (SENPSSLASHSSSS) show a composition bias toward low complexity. One can recognise an SET domain in the interval 104 to 226 (RLLEVYKDVV…QGEELLYDYG (123 aa)). S-adenosyl-L-methionine-binding positions include 114-116 (KGR), tyrosine 159, and 186-187 (NH).

This sequence belongs to the class V-like SAM-binding methyltransferase superfamily. Histone-lysine methyltransferase family. PR/SET subfamily. In embryos, it is expressed ubiquitously. In late embryos, it is expressed in hypodermal seam cells. In L3 and L4 larvae and thereafter, it is expressed in vulval precursor cells. In adult males, it is also expressed in 6 unidentified posterior cells.

The protein resides in the nucleus. It localises to the chromosome. It catalyses the reaction L-lysyl(20)-[histone H4] + S-adenosyl-L-methionine = N(6)-methyl-L-lysyl(20)-[histone H4] + S-adenosyl-L-homocysteine + H(+). In terms of biological role, histone methyltransferase that specifically monomethylates 'Lys-20' of histone H4 (H4K20me1). H4K20me1 is enriched on hermaphrodite X chromosomes and during mitosis. Involved in dosage compensation by repression of X-linked gene expression in hermaphrodites. Plays a role in growth and body fat regulation downstream of the TOR complex 2 pathway. The protein is Histone-lysine N-methyltransferase set-1 (set-1) of Caenorhabditis elegans.